The primary structure comprises 193 residues: WYSSMFAANIKQEPISHHLHHHHAHHSHHRHDSNSNSNASSPHQSPLPSPNPPSNTNLQLEQYLKQQQQQQQLQQQQQQPMDTLCAAAMTPSPSNNDQNSLGWLSGLPNPMQTIMPANMRPSPTATTATAAAAAPTTTVAAIALQANDKLQALTPPMDVTPPKSPAKSQQSCAEPEKEHDLMSNSSEDMKYMA.

Residues 18-31 (HLHHHHAHHSHHRH) are compositionally biased toward basic residues. 2 disordered regions span residues 18-57 (HLHHHHAHHSHHRHDSNSNSNASSPHQSPLPSPNPPSNTN) and 153-193 (LTPP…KYMA). Residues 34–44 (NSNSNASSPHQ) are compositionally biased toward low complexity. Positions 174-193 (EPEKEHDLMSNSSEDMKYMA) are enriched in basic and acidic residues.

Belongs to the hunchback C2H2-type zinc-finger protein family.

Its subcellular location is the nucleus. Its function is as follows. Gap class segmentation protein that controls development of head structures. This is Protein hunchback (hb) from Drosophila petalopeza (Fruit fly).